A 282-amino-acid polypeptide reads, in one-letter code: D-alanine aminotransferase (282 aa).

Y32 contributes to the substrate binding site. R51 lines the pyridoxal 5'-phosphate pocket. Positions 99 and 101 each coordinate substrate. K146 acts as the Proton acceptor in catalysis. K146 is modified (N6-(pyridoxal phosphate)lysine). E178 contributes to the pyridoxal 5'-phosphate binding site.

This sequence belongs to the class-IV pyridoxal-phosphate-dependent aminotransferase family. Homodimer. Requires pyridoxal 5'-phosphate as cofactor.

It catalyses the reaction D-alanine + 2-oxoglutarate = D-glutamate + pyruvate. In terms of biological role, acts on the D-isomers of alanine, leucine, aspartate, glutamate, aminobutyrate, norvaline and asparagine. The enzyme transfers an amino group from a substrate D-amino acid to the pyridoxal phosphate cofactor to form pyridoxamine and an alpha-keto acid in the first half-reaction. The second half-reaction is the reverse of the first, transferring the amino group from the pyridoxamine to a second alpha-keto acid to form the product D-amino acid via a ping-pong mechanism. This is an important process in the formation of D-alanine and D-glutamate, which are essential bacterial cell wall components. In Staphylococcus haemolyticus, this protein is D-alanine aminotransferase (dat).